A 648-amino-acid chain; its full sequence is Bifunctional protein TilS/HprT (648 aa).

ATP is bound at residue serine 29 to serine 34. Position 627 (aspartate 627) interacts with Mg(2+).

It in the N-terminal section; belongs to the tRNA(Ile)-lysidine synthase family. The protein in the C-terminal section; belongs to the purine/pyrimidine phosphoribosyltransferase family. It depends on Mg(2+) as a cofactor.

It localises to the cytoplasm. It carries out the reaction IMP + diphosphate = hypoxanthine + 5-phospho-alpha-D-ribose 1-diphosphate. The catalysed reaction is GMP + diphosphate = guanine + 5-phospho-alpha-D-ribose 1-diphosphate. The enzyme catalyses cytidine(34) in tRNA(Ile2) + L-lysine + ATP = lysidine(34) in tRNA(Ile2) + AMP + diphosphate + H(+). Its function is as follows. Ligates lysine onto the cytidine present at position 34 of the AUA codon-specific tRNA(Ile) that contains the anticodon CAU, in an ATP-dependent manner. Cytidine is converted to lysidine, thus changing the amino acid specificity of the tRNA from methionine to isoleucine. The sequence is that of Bifunctional protein TilS/HprT (tilS/hprT) from Listeria monocytogenes serotype 4b (strain F2365).